The following is a 609-amino-acid chain: 2',5'-phosphodiesterase 12 (609 aa).

A mitochondrion-targeting transit peptide spans 1–42 (MWRLPGARAALRVIRTAVEKLSRAEAGSQTAAGAMERAVVRC). The segment covering 89-99 (AAAAKKSRKSR) has biased composition (basic residues). Disordered stretches follow at residues 89 to 111 (AAAA…CSGP) and 206 to 230 (AEPE…ETDV). Composition is skewed to low complexity over residues 100–111 (PNASGGAACSGP) and 213–224 (PSSLSPSSPSSS). Phosphoserine is present on serine 217. Mg(2+) is bound by residues glutamate 351, aspartate 496, and asparagine 498. Aspartate 496 serves as the catalytic Proton donor/acceptor.

The protein belongs to the CCR4/nocturin family. The cofactor is Mg(2+). In terms of tissue distribution, ubiquitous.

The protein localises to the mitochondrion matrix. The catalysed reaction is Exonucleolytic cleavage of poly(A) to 5'-AMP.. Functionally, enzyme that cleaves 2',5'-phosphodiester bond linking adenosines of the 5'-triphosphorylated oligoadenylates, triphosphorylated oligoadenylates referred as 2-5A modulates the 2-5A system. Degrades triphosphorylated 2-5A to produce AMP and ATP. Also cleaves 3',5'-phosphodiester bond of oligoadenylates. Plays a role as a negative regulator of the 2-5A system that is one of the major pathways for antiviral and antitumor functions induced by interferons (IFNs). Suppression of this enzyme increases cellular 2-5A levels and decreases viral replication in cultured small-airway epithelial cells and Hela cells. This Homo sapiens (Human) protein is 2',5'-phosphodiesterase 12 (PDE12).